The primary structure comprises 109 residues: Elongation factor G, chloroplastic (109 aa).

It belongs to the GTP-binding elongation factor family. EF-G/EF-2 subfamily.

The protein resides in the plastid. It localises to the chloroplast. It participates in protein biosynthesis; polypeptide chain elongation. Chloroplast-localized elongation factor EF-G involved in protein synthesis in plastids. Catalyzes the GTP-dependent ribosomal translocation step during translation elongation. During this step, the ribosome changes from the pre-translocational (PRE) to the post-translocational (POST) state as the newly formed A-site-bound peptidyl-tRNA and P-site-bound deacylated tRNA move to the P and E sites, respectively. Catalyzes the coordinated movement of the two tRNA molecules, the mRNA and conformational changes in the ribosome. This chain is Elongation factor G, chloroplastic, found in Arachis hypogaea (Peanut).